The primary structure comprises 202 residues: Large ribosomal subunit protein bL17 (202 aa).

The disordered stretch occupies residues 148 to 202; the sequence is DEAPAAESTDAAQVEAGGVEQPDTLPDADAPATADEGVEVDAAEVDPSDEKKDQA. The segment covering 169-182 has biased composition (low complexity); sequence PDTLPDADAPATAD. Positions 183 to 194 are enriched in acidic residues; the sequence is EGVEVDAAEVDP.

Belongs to the bacterial ribosomal protein bL17 family. In terms of assembly, part of the 50S ribosomal subunit. Contacts protein L32.

The sequence is that of Large ribosomal subunit protein bL17 from Kineococcus radiotolerans (strain ATCC BAA-149 / DSM 14245 / SRS30216).